A 327-amino-acid polypeptide reads, in one-letter code: L-lactate dehydrogenase (327 aa).

NAD(+) contacts are provided by residues Val-18, Asp-39, Arg-44, Tyr-69, and Gly-83–Leu-84. Substrate-binding positions include Gln-86, Arg-92, and Asn-124 to Asp-127. NAD(+) is bound by residues Ala-122–Asn-124 and Ser-147. A substrate-binding site is contributed by Asp-152–Arg-155. 2 residues coordinate beta-D-fructose 1,6-bisphosphate: Arg-157 and His-172. The active-site Proton acceptor is the His-179. Tyr-224 carries the phosphotyrosine modification. Thr-233 is a binding site for substrate.

It belongs to the LDH/MDH superfamily. LDH family. Homotetramer.

The protein localises to the cytoplasm. The catalysed reaction is (S)-lactate + NAD(+) = pyruvate + NADH + H(+). The protein operates within fermentation; pyruvate fermentation to lactate; (S)-lactate from pyruvate: step 1/1. Allosterically activated by fructose 1,6-bisphosphate (FBP). Catalyzes the conversion of lactate to pyruvate. This is L-lactate dehydrogenase from Streptococcus suis (strain 98HAH33).